The following is a 342-amino-acid chain: Lipase B (342 aa).

The signal sequence occupies residues 1–18; it reads MKLLSLTGVAGVLATCVA. The propeptide occupies 19–25; sequence ATPLVKR. The cysteines at positions 47 and 89 are disulfide-linked. A glycan (N-linked (GlcNAc...) asparagine) is linked at Asn-99. Catalysis depends on residues Ser-130, Asp-212, and His-249. Intrachain disulfides connect Cys-241-Cys-283 and Cys-318-Cys-336.

It carries out the reaction a triacylglycerol + H2O = a diacylglycerol + a fatty acid + H(+). Functionally, hydrolysis of triglycerides. Is very stereospecific both in hydrolysis and in organic synthesis and has a potentially important application in glucolipid synthesis. The polypeptide is Lipase B (Pseudozyma antarctica (Yeast)).